The following is a 322-amino-acid chain: Ethylmalonyl-CoA decarboxylase (322 aa).

An N6-acetyllysine; alternate modification is found at Lys-232. Position 232 is an N6-succinyllysine; alternate (Lys-232). Lys-316 bears the N6-succinyllysine mark.

The protein belongs to the enoyl-CoA hydratase/isomerase family.

It is found in the cytoplasm. Its subcellular location is the cytosol. It catalyses the reaction (2S)-ethylmalonyl-CoA + H(+) = butanoyl-CoA + CO2. The catalysed reaction is (S)-methylmalonyl-CoA + H(+) = propanoyl-CoA + CO2. It carries out the reaction (2R)-ethylmalonyl-CoA + H(+) = butanoyl-CoA + CO2. Its function is as follows. Decarboxylates ethylmalonyl-CoA, a potentially toxic metabolite, to form butyryl-CoA, suggesting it might be involved in metabolite proofreading. Acts preferentially on (S)-ethylmalonyl-CoA but also has some activity on the (R)-isomer. Also has methylmalonyl-CoA decarboxylase activity at lower level. This Mus musculus (Mouse) protein is Ethylmalonyl-CoA decarboxylase (Echdc1).